Reading from the N-terminus, the 809-residue chain is Probable replication endonuclease from prophage-like region (809 aa).

Catalysis depends on O-(5'-phospho-DNA)-tyrosine intermediate residues Y503 and Y507.

This sequence belongs to the phage GPA family.

In terms of biological role, possible endonuclease which induces a single-strand cut and initiates DNA replication. This Salmonella typhimurium (strain LT2 / SGSC1412 / ATCC 700720) protein is Probable replication endonuclease from prophage-like region.